A 542-amino-acid chain; its full sequence is MATVGTEEKNPIGSASNTAEPNVTEPQKQYASGFKLTIIVISLCLSLFLCGLDQTIITTAVPIITNDFKAIEDVGWYTTAYLLTTSSFQIAYGKLYTTLSVKMILLMALAIFELGSIICAAAPNSTTLIVGRAIAGLGAAGIFPGSTLVLVHAAPMERRPALLGITTGMFGIASLCGPFIGGAFADGASWRWCFIINVPLGVITAVIVTFFVFTPVDPLYAEWTFKDKLAYAKIPEILVLVAALVCLVLGLQWGGTTYAWSDGRIIALLVVFAVLTTAFLVLQVLLPKSRTIPTSIVKNRNIWFASIFALCSSGAMFIAVTYLPIYFQAIKNASALSSGVNVMPLILGFLVMSIISGVITNTTGYYNPSMFLCTILASVGAGLVSTFDVGTPQPKWIGYQALLGFGIGFGLQQPIVCAQHVLDERDVPFGVAFINMMQMLGGAIFVAVSQNVFLNGLANGIAEALPGFNTHKIIEGGLTDFKNLFTSDQLPKAIPVYAHVLGQVFLIATGLCVGTLLGSLGVQWRSVKKAKVTEDQADVERK.

Basic and acidic residues predominate over residues 1–10; sequence MATVGTEEKN. The segment at 1 to 24 is disordered; it reads MATVGTEEKNPIGSASNTAEPNVT. Residues 13-24 show a composition bias toward polar residues; the sequence is GSASNTAEPNVT. The N-linked (GlcNAc...) asparagine glycan is linked to N22. 3 consecutive transmembrane segments (helical) span residues 32-52, 75-97, and 103-123; these read SGFK…LCGL, GWYT…KLYT, and MILL…AAAP. N-linked (GlcNAc...) asparagine glycosylation occurs at N124. Transmembrane regions (helical) follow at residues 133–153, 161–181, 193–213, 234–254, 265–285, and 307–327; these read AIAG…LVHA, ALLG…PFIG, CFII…FFVF, IPEI…LQWG, IIAL…LQVL, and IFAL…PIYF. Residue N332 is glycosylated (N-linked (GlcNAc...) asparagine). The chain crosses the membrane as a helical span at residues 339-359; sequence GVNVMPLILGFLVMSIISGVI. Residue N361 is glycosylated (N-linked (GlcNAc...) asparagine). 4 helical membrane-spanning segments follow: residues 370-390, 396-416, 427-447, and 500-520; these read MFLC…FDVG, WIGY…QPIV, VPFG…IFVA, and VLGQ…LGSL.

It belongs to the major facilitator superfamily.

Its subcellular location is the cell membrane. Functionally, MFS efflux transporter probably involved in thioclapurine export. The chain is MFS thioclapurine efflux transporter tcpA from Claviceps purpurea (strain 20.1) (Ergot fungus).